The following is a 72-amino-acid chain: Small proline-rich protein 2B (72 aa).

Over residues 1-11 (MSYQQQQCKQP) the composition is skewed to low complexity. Positions 1-20 (MSYQQQQCKQPCQPPPVCPT) are disordered. 3 consecutive repeat copies span residues 21-29 (PKCPEPCPP), 30-38 (PKCPEPCPP), and 39-47 (PKCPQPCPP). The 3 X 9 AA tandem repeats of P-K-C-P-[EQ]-P-C-P-P stretch occupies residues 21 to 47 (PKCPEPCPPPKCPEPCPPPKCPQPCPP). Residues 42 to 72 (PQPCPPQQCQQKYPPVTPSPPCQPKYPPKSK) form a disordered region. The span at 56-72 (PVTPSPPCQPKYPPKSK) shows a compositional bias: pro residues.

It belongs to the cornifin (SPRR) family. As to expression, suprabasal layers of squamous-differentiated tissues such as epidermis, esophagus, tongue and trachea.

The protein localises to the cytoplasm. Cross-linked envelope protein of keratinocytes. It is a keratinocyte protein that first appears in the cell cytosol, but ultimately becomes cross-linked to membrane proteins by transglutaminase. All that results in the formation of an insoluble envelope beneath the plasma membrane. This is Small proline-rich protein 2B (SPRR2B) from Homo sapiens (Human).